Consider the following 479-residue polypeptide: Variant surface glycoprotein ILTAT 1.22 (479 aa).

Positions methionine 1 to methionine 12 are cleaved as a signal peptide. N-linked (GlcNAc...) asparagine glycosylation is found at asparagine 120 and asparagine 458. Residue asparagine 462 is the site of GPI-anchor amidated asparagine attachment. A propeptide spans asparagine 463 to phenylalanine 479 (removed in mature form).

Its subcellular location is the cell membrane. In terms of biological role, VSG forms a coat on the surface of the parasite. The trypanosome evades the immune response of the host by expressing a series of antigenically distinct VSGs from an estimated 1000 VSG genes. This Trypanosoma brucei brucei protein is Variant surface glycoprotein ILTAT 1.22.